The primary structure comprises 414 residues: DNA polymerase IV (414 aa).

One can recognise a UmuC domain in the interval 8–189 (IFHIDMNSFY…LPIEEMHGIG (182 aa)). D12 and D108 together coordinate Mg(2+). Residue E109 is part of the active site. A disordered region spans residues 394 to 414 (EESKTRGTSFNRDFFQDEKKR).

The protein belongs to the DNA polymerase type-Y family. Monomer. Mg(2+) serves as cofactor.

The protein resides in the cytoplasm. The enzyme catalyses DNA(n) + a 2'-deoxyribonucleoside 5'-triphosphate = DNA(n+1) + diphosphate. In terms of biological role, poorly processive, error-prone DNA polymerase involved in untargeted mutagenesis. Copies undamaged DNA at stalled replication forks, which arise in vivo from mismatched or misaligned primer ends. These misaligned primers can be extended by PolIV. Exhibits no 3'-5' exonuclease (proofreading) activity. May be involved in translesional synthesis, in conjunction with the beta clamp from PolIII. The protein is DNA polymerase IV of Bacillus velezensis (strain DSM 23117 / BGSC 10A6 / LMG 26770 / FZB42) (Bacillus amyloliquefaciens subsp. plantarum).